The chain runs to 390 residues: MADEWFETVAIAQQRAKRRLPKSVYSSLISASEKGITVADNVAAFSELGFAPHVIGAAEKRDMSTTVMGQDISMPVLISPTGVQAVHPDGEVAVARAAAARGTAMGLSSFASKTIEDVIAANPKIFFQIYWLGGRDAIAERVERARQAGAVGLIVTTDWTFSHGRDWGSPKIPEQMNLRTILRLSPEAIVRPRWLWKFGKTLRPPDLRVPNQGRRGEPGPAFFAAYGEWMGTPPPTWDDIAWLRELWGGPFMLKGVMRVDDAKRAVDAGVSAISVSNHGGNNLDGTPASIRALPAVAAAVGDQVEVLLDGGIRRGSDVVKAVALGARAVLVGRAYLWGLAANGQAGVENVLDILRGGIDSALMGLGHSSIHDLRSDDILIPADFVRRLGR.

Positions 1–383 (MADEWFETVA…RSDDILIPAD (383 aa)) constitute an FMN hydroxy acid dehydrogenase domain. Residues S108, Q128, T156, and K254 each contribute to the FMN site. Catalysis depends on H278, which acts as the Proton acceptor. Residues 309–313 (DGGIR) and 332–333 (GR) contribute to the FMN site.

The protein belongs to the FMN-dependent alpha-hydroxy acid dehydrogenase family. Requires FMN as cofactor.

The enzyme catalyses 3-amino-5-[(4-hydroxyphenyl)methyl]-4,4-dimethyl-2-pyrrolidin-2-one + O2 + H2O = pre-mycofactocin + H2O2 + NH4(+). In terms of biological role, involved in the biosynthesis of the enzyme cofactor mycofactocin (MFT). Catalyzes the oxidative deamination of AHDP (3-amino-5-[(4-hydroxyphenyl)methyl]-4,4-dimethyl-2-pyrrolidin-2-one), forming an alpha-keto amide moiety on the resulting molecule, which is called pre-mycofactocin (PMFT). This reaction occurs via a 5-[(4-hydroxyphenyl)methyl]-3-imino-4,4-dimethylpyrrolidin-2-one intermediate, which converts to PMFT. The alpha-keto amide moiety is the redox-active center for the redox activity of mycofactocin. The sequence is that of Pre-mycofactocin synthase from Mycobacterium ulcerans (strain Agy99).